The chain runs to 225 residues: Small ribosomal subunit protein L51-b (225 aa).

A mitochondrion-targeting transit peptide spans 1–84; the sequence is MKFPDLLRCS…QCAFISSDRF (84 aa).

It belongs to the bacterial ribosomal protein bS1 family. Component of the mitochondrial small ribosomal subunit (mt-SSU). Mature yeast 74S mitochondrial ribosomes consist of a small (37S) and a large (54S) subunit. The 37S small subunit contains a 15S ribosomal RNA (15S mt-rRNA) and at least 32 different proteins. The 54S large subunit contains a 21S rRNA (21S mt-rRNA) and at least 45 different proteins. This subunit is mutually exclusive with mrp51/small ribosomal subunit protein bS1m.

It is found in the mitochondrion. Component of the mitochondrial ribosome (mitoribosome), a dedicated translation machinery responsible for the synthesis of mitochondrial genome-encoded proteins, including at least some of the essential transmembrane subunits of the mitochondrial respiratory chain. The mitoribosomes are attached to the mitochondrial inner membrane and translation products are cotranslationally integrated into the membrane. Functionally interacts with the 5'-UTR of mitochondrial mRNAs. Specifically plays a role in the translation of cob1/cytochrome b and cox3. Has a role in meiosis. The chain is Small ribosomal subunit protein L51-b from Schizosaccharomyces pombe (strain 972 / ATCC 24843) (Fission yeast).